Reading from the N-terminus, the 321-residue chain is Glucokinase (321 aa).

Residue 8–13 coordinates ATP; it reads GDVGGT.

The protein belongs to the bacterial glucokinase family.

It localises to the cytoplasm. It catalyses the reaction D-glucose + ATP = D-glucose 6-phosphate + ADP + H(+). This chain is Glucokinase, found in Erwinia tasmaniensis (strain DSM 17950 / CFBP 7177 / CIP 109463 / NCPPB 4357 / Et1/99).